Consider the following 351-residue polypeptide: Silk gland factor 3 (351 aa).

2 disordered regions span residues A61–R88 and S131–S154. A compositionally biased stretch (basic and acidic residues) spans D135–D145. The POU-specific domain occupies E149–D223. The segment at residues K241–T300 is a DNA-binding region (homeobox). The segment at G314–H351 is disordered.

Belongs to the POU transcription factor family. Class-3 subfamily. Restricted to the middle silk gland.

Its subcellular location is the nucleus. In terms of biological role, involved in the transcriptional regulation of sericin-1 gene. The sequence is that of Silk gland factor 3 (SGF3) from Bombyx mori (Silk moth).